The sequence spans 397 residues: uncharacterized protein (397 aa).

A run of 11 helical transmembrane segments spans residues 9–29, 38–58, 85–105, 112–132, 148–168, 182–202, 226–246, 271–291, 310–330, 331–351, and 365–385; these read NAVL…GFLT, LLAS…GAQL, FLAA…VGGA, IFGI…ILIF, MGFI…PPVV, PIAI…FAGA, AILI…GVVS, VLFG…AAYT, WIIA…KPAA, VLVF…ALIL, and HPVF…ILSG.

The protein belongs to the NRAMP family.

It localises to the cell membrane. This is an uncharacterized protein from Haemophilus influenzae (strain ATCC 51907 / DSM 11121 / KW20 / Rd).